A 291-amino-acid polypeptide reads, in one-letter code: Protease HtpX homolog (291 aa).

The next 2 membrane-spanning stretches (helical) occupy residues 11-31 (INTF…GLLA) and 34-54 (FLGM…ACVQ). Histidine 140 contributes to the Zn(2+) binding site. Residue glutamate 141 is part of the active site. Histidine 144 provides a ligand contact to Zn(2+). The next 2 helical transmembrane spans lie at 155–175 (IVFG…RALI) and 186–206 (AFSF…AMLV). Glutamate 215 serves as a coordination point for Zn(2+).

This sequence belongs to the peptidase M48B family. Zn(2+) serves as cofactor.

Its subcellular location is the cell membrane. The sequence is that of Protease HtpX homolog from Tropheryma whipplei (strain Twist) (Whipple's bacillus).